Consider the following 203-residue polypeptide: NADH dehydrogenase [ubiquinone] 1 alpha subcomplex assembly factor 4 (203 aa).

Belongs to the NDUFAF4 family. As to quaternary structure, together with NdufAF3 associates with mitochondrial complex I assembly intermediates during its biogenesis.

Involved in the assembly of mitochondrial NADH:ubiquinone oxidoreductase complex (complex I). Together with NdufAF3, involved in biogenesis of complex 1 modules N, Q and P-peripheral, but not the P-distal module. Required for recruitment of the complex I assembly factor Timmdc1 to complex 1 assembly intermediates. This chain is NADH dehydrogenase [ubiquinone] 1 alpha subcomplex assembly factor 4, found in Drosophila melanogaster (Fruit fly).